The following is a 204-amino-acid chain: Outer-membrane lipoprotein LolB (204 aa).

The first 16 residues, 1 to 16 (MLRHLLVFSLIALLAG), serve as a signal peptide directing secretion. Cys17 is lipidated: N-palmitoyl cysteine. Cys17 carries S-diacylglycerol cysteine lipidation.

The protein belongs to the LolB family. As to quaternary structure, monomer.

The protein resides in the cell outer membrane. Its function is as follows. Plays a critical role in the incorporation of lipoproteins in the outer membrane after they are released by the LolA protein. This Ectopseudomonas mendocina (strain ymp) (Pseudomonas mendocina) protein is Outer-membrane lipoprotein LolB.